The sequence spans 178 residues: Napin-B (178 aa).

Residues 1 to 21 (MANKLFLVSATLAFFFLLTNA) form the signal peptide. 2 propeptides span residues 22-38 (SIYRTVVEFDEDDATNP) and 75-94 (PSWTLDGEFDFEDDMENPQG).

The protein belongs to the 2S seed storage albumins family. The mature protein consists of a small and a large chain linked by disulfide bonds. In terms of tissue distribution, cotyledons and the axis.

Functionally, the small, basic, water-soluble napins are one of the two major kinds of storage proteins synthesized in the seed during its maturation. This chain is Napin-B (NAPB), found in Brassica napus (Rape).